A 152-amino-acid polypeptide reads, in one-letter code: Endoribonuclease YbeY (152 aa).

His-116, His-120, and His-126 together coordinate Zn(2+).

The protein belongs to the endoribonuclease YbeY family. The cofactor is Zn(2+).

It localises to the cytoplasm. Its function is as follows. Single strand-specific metallo-endoribonuclease involved in late-stage 70S ribosome quality control and in maturation of the 3' terminus of the 16S rRNA. The chain is Endoribonuclease YbeY from Mycoplasma mobile (strain ATCC 43663 / 163K / NCTC 11711) (Mesomycoplasma mobile).